The following is a 424-amino-acid chain: Riboflavin biosynthesis protein RibBA (424 aa).

The DHBP synthase stretch occupies residues 1–206 (MVTCEAGIAS…VDDLITYRWT (206 aa)). Residues 32 to 33 (RE), aspartate 37, 145 to 149 (RPGHT), and glutamate 169 contribute to the D-ribulose 5-phosphate site. Glutamate 33 provides a ligand contact to Mg(2+). Histidine 148 provides a ligand contact to Mg(2+). The interval 207 to 424 (FDSLVEHVSS…YETVERTSCC (218 aa)) is GTP cyclohydrolase II. 257–261 (RVHSE) contacts GTP. Zn(2+)-binding residues include cysteine 262, cysteine 273, and cysteine 275. Residues glutamine 278, 301-303 (EGR), and threonine 323 contribute to the GTP site. Catalysis depends on aspartate 335, which acts as the Proton acceptor; for GTP cyclohydrolase activity. Catalysis depends on arginine 337, which acts as the Nucleophile; for GTP cyclohydrolase activity. Positions 358 and 363 each coordinate GTP.

In the N-terminal section; belongs to the DHBP synthase family. It in the C-terminal section; belongs to the GTP cyclohydrolase II family. The cofactor is Mg(2+). Mn(2+) serves as cofactor. Requires Zn(2+) as cofactor.

The enzyme catalyses D-ribulose 5-phosphate = (2S)-2-hydroxy-3-oxobutyl phosphate + formate + H(+). It catalyses the reaction GTP + 4 H2O = 2,5-diamino-6-hydroxy-4-(5-phosphoribosylamino)-pyrimidine + formate + 2 phosphate + 3 H(+). The protein operates within cofactor biosynthesis; riboflavin biosynthesis; 2-hydroxy-3-oxobutyl phosphate from D-ribulose 5-phosphate: step 1/1. It participates in cofactor biosynthesis; riboflavin biosynthesis; 5-amino-6-(D-ribitylamino)uracil from GTP: step 1/4. In terms of biological role, catalyzes the conversion of D-ribulose 5-phosphate to formate and 3,4-dihydroxy-2-butanone 4-phosphate. Its function is as follows. Catalyzes the conversion of GTP to 2,5-diamino-6-ribosylamino-4(3H)-pyrimidinone 5'-phosphate (DARP), formate and pyrophosphate. In Chlamydia muridarum (strain MoPn / Nigg), this protein is Riboflavin biosynthesis protein RibBA.